The chain runs to 37 residues: Large ribosomal subunit protein bL36 (37 aa).

The protein belongs to the bacterial ribosomal protein bL36 family.

The sequence is that of Large ribosomal subunit protein bL36 from Deinococcus geothermalis (strain DSM 11300 / CIP 105573 / AG-3a).